We begin with the raw amino-acid sequence, 86 residues long: High affinity immunoglobulin epsilon receptor subunit gamma (86 aa).

Residues 1-18 (MISAVILFLLLLVEQAAA) form the signal peptide. Residues 19–23 (LGEPQ) are Extracellular-facing. A helical transmembrane segment spans residues 24–44 (LCYILDAVLFLYGIVLTLLYC). Residues 45–86 (RLKIQVRKAAIASREKADAVYTGLNTRSQETYETLKHEKPPQ) lie on the Cytoplasmic side of the membrane. Residues 54 to 82 (AIASREKADAVYTGLNTRSQETYETLKHE) enclose the ITAM domain. Phosphotyrosine is present on residues Y65 and Y76. Phosphothreonine is present on T78.

The protein belongs to the CD3Z/FCER1G family. As to quaternary structure, igE Fc receptor is a tetramer of an alpha chain, a beta chain, and two disulfide linked gamma chains. Associates with FCGR1A; forms a functional signaling complex. The signaling subunit of immunoglobulin gamma (IgG) Fc receptor complex. As a homodimer or a heterodimer of CD247 and FCER1G, associates with the ligand binding subunit FCGR3A to form a functional receptor complex. Associates with CLEC6A. Interacts with CLEC4E. Interacts (via ITAM domain) with SYK (via SH2 domains); activates SYK, enabling integrin-mediated activation of neutrophils and macrophages. Interacts with CSF2RB and recruits SYK in response to IL3 stimulation; this interaction is direct. Interacts with CD300LH; the interaction may be indirect. Interacts with CD300LD. Interacts with TARM1. In terms of tissue distribution, expressed in mast cells (at protein level). Expressed in basophils (at protein level).

It is found in the cell membrane. Functionally, adapter protein containing an immunoreceptor tyrosine-based activation motif (ITAM) that transduces activation signals from various immunoreceptors. As a component of the high-affinity immunoglobulin E (IgE) receptor, mediates allergic inflammatory signaling in mast cells. As a constitutive component of interleukin-3 receptor complex, selectively mediates interleukin 4/IL4 production by basophils, priming T-cells toward effector T-helper 2 subset. Associates with pattern recognition receptors CLEC4D and CLEC4E to form a functional signaling complex in myeloid cells. Binding of mycobacterial trehalose 6,6'-dimycolate (TDM) to this receptor complex leads to phosphorylation of ITAM, triggering activation of SYK, CARD9 and NF-kappa-B, consequently driving maturation of antigen-presenting cells and shaping antigen-specific priming of T-cells toward effector T-helper 1 and T-helper 17 cell subtypes. May function cooperatively with other activating receptors. Functionally linked to integrin beta-2/ITGB2-mediated neutrophil activation. Also involved in integrin alpha-2/ITGA2-mediated platelet activation. The chain is High affinity immunoglobulin epsilon receptor subunit gamma from Mus musculus (Mouse).